Here is a 333-residue protein sequence, read N- to C-terminus: 4-hydroxythreonine-4-phosphate dehydrogenase (333 aa).

The substrate site is built by His136 and Thr137. A divalent metal cation-binding residues include His166, His211, and His266. Residues Lys274, Asn283, and Arg292 each contribute to the substrate site.

This sequence belongs to the PdxA family. As to quaternary structure, homodimer. Requires Zn(2+) as cofactor. Mg(2+) serves as cofactor. The cofactor is Co(2+).

The protein resides in the cytoplasm. It carries out the reaction 4-(phosphooxy)-L-threonine + NAD(+) = 3-amino-2-oxopropyl phosphate + CO2 + NADH. Its pathway is cofactor biosynthesis; pyridoxine 5'-phosphate biosynthesis; pyridoxine 5'-phosphate from D-erythrose 4-phosphate: step 4/5. Catalyzes the NAD(P)-dependent oxidation of 4-(phosphooxy)-L-threonine (HTP) into 2-amino-3-oxo-4-(phosphooxy)butyric acid which spontaneously decarboxylates to form 3-amino-2-oxopropyl phosphate (AHAP). In Acidithiobacillus ferrooxidans (strain ATCC 23270 / DSM 14882 / CIP 104768 / NCIMB 8455) (Ferrobacillus ferrooxidans (strain ATCC 23270)), this protein is 4-hydroxythreonine-4-phosphate dehydrogenase.